The following is a 459-amino-acid chain: Elongation factor 1-alpha (459 aa).

Gly-2 bears the N,N,N-trimethylglycine mark. Residue Lys-3 is modified to N6,N6-dimethyllysine; alternate. N6-methyllysine; alternate is present on Lys-3. Residues 5–240 form the tr-type G domain; it reads KTHVNVVVIG…DAVDPPTRPS (236 aa). Positions 14–21 are G1; that stretch reads GHVDSGKS. Position 14–21 (14–21) interacts with GTP; sequence GHVDSGKS. Lys-30 is subject to N6-methyllysine. The interval 70–74 is G2; that stretch reads VITID. Lys-79 bears the N6,N6,N6-trimethyllysine mark. A G3 region spans residues 91–94; that stretch reads DAPG. GTP is bound by residues 91–95 and 153–156; these read DAPGH and NKMD. The segment at 153–156 is G4; the sequence is NKMD. Residues 192–194 are G5; it reads SGW. Lys-316 is subject to N6,N6-dimethyllysine; alternate. Residue Lys-316 is modified to N6-methyllysine; alternate. An N6-methyllysine modification is found at Lys-390.

The protein belongs to the TRAFAC class translation factor GTPase superfamily. Classic translation factor GTPase family. EF-Tu/EF-1A subfamily.

The protein localises to the cytoplasm. Functionally, this protein promotes the GTP-dependent binding of aminoacyl-tRNA to the A-site of ribosomes during protein biosynthesis. The protein is Elongation factor 1-alpha (TEF) of Blastobotrys adeninivorans (Yeast).